A 686-amino-acid chain; its full sequence is Kinesin light chain (686 aa).

Disordered regions lie at residues 1–23 (MSGS…SQEQ) and 158–204 (KYDE…SVSA). Residues 20 to 160 (SQEQIITGTR…EYMNSIKKYD (141 aa)) are a coiled coil. TPR repeat units lie at residues 215 to 248 (LRTL…LEKT), 257 to 290 (ATML…REKT), 299 to 332 (AATL…REKV), 341 to 374 (AKQL…YEKK), 383 to 416 (AKTK…AHER), and 472 to 505 (TTTL…RRNA). Disordered stretches follow at residues 520–558 (QDLS…YEKT) and 586–686 (GYVE…SGNF). The span at 675-686 (DNLSSRRQSGNF) shows a compositional bias: polar residues.

This sequence belongs to the kinesin light chain family. Oligomeric complex composed of two heavy chains and two light chains. In terms of processing, phosphorylation may modulate the process of mechanochemical coupling.

Its subcellular location is the cytoplasm. It is found in the cytoskeleton. Its function is as follows. Kinesin is a microtubule-associated force-producing protein that may play a role in organelle transport. The light chain may function in coupling of cargo to the heavy chain or in the modulation of its ATPase activity. In Strongylocentrotus purpuratus (Purple sea urchin), this protein is Kinesin light chain.